The primary structure comprises 202 residues: Nucleoside triphosphate pyrophosphatase (202 aa).

Catalysis depends on aspartate 79, which acts as the Proton acceptor.

Belongs to the Maf family. The cofactor is a divalent metal cation.

It is found in the cytoplasm. It catalyses the reaction a ribonucleoside 5'-triphosphate + H2O = a ribonucleoside 5'-phosphate + diphosphate + H(+). It carries out the reaction a 2'-deoxyribonucleoside 5'-triphosphate + H2O = a 2'-deoxyribonucleoside 5'-phosphate + diphosphate + H(+). Its function is as follows. Nucleoside triphosphate pyrophosphatase. May have a dual role in cell division arrest and in preventing the incorporation of modified nucleotides into cellular nucleic acids. The sequence is that of Nucleoside triphosphate pyrophosphatase from Nitrobacter winogradskyi (strain ATCC 25391 / DSM 10237 / CIP 104748 / NCIMB 11846 / Nb-255).